The sequence spans 811 residues: Glycerol-3-phosphate acyltransferase (811 aa).

The short motif at 303 to 308 is the HXXXXD motif element; that stretch reads HRSHMD.

This sequence belongs to the GPAT/DAPAT family.

It localises to the cell inner membrane. It carries out the reaction sn-glycerol 3-phosphate + an acyl-CoA = a 1-acyl-sn-glycero-3-phosphate + CoA. The protein operates within phospholipid metabolism; CDP-diacylglycerol biosynthesis; CDP-diacylglycerol from sn-glycerol 3-phosphate: step 1/3. The sequence is that of Glycerol-3-phosphate acyltransferase from Haemophilus ducreyi (strain 35000HP / ATCC 700724).